We begin with the raw amino-acid sequence, 657 residues long: Broad substrate specificity ATP-binding cassette transporter ABCG2 (657 aa).

The tract at residues 1 to 25 (MSSSNDHVLVPMSQRNKNGLPGMSS) is disordered. The Cytoplasmic segment spans residues 1–395 (MSSSNDHVLV…KNLLGNPQAS (395 aa)). An ABC transporter domain is found at 48–285 (VKSGFLVRKT…FASAGYHCEP (238 aa)). Residues 79-86 (GPTGGGKS), 183-189 (RGISGGE), Glu-210, and His-242 each bind ATP. Residues 389-653 (LGNPQASVAQ…TIAYLKLLFL (265 aa)) form the ABC transmembrane type-2 domain. The chain crosses the membrane as a helical span at residues 396-416 (VAQLIVTVILGLIIGALYFGL). The Extracellular segment spans residues 417–428 (KNDPTGMQNRAG). A helical transmembrane segment spans residues 429 to 449 (VFFFLTTNQCFTSVSAVELFV). Residues 450–477 (VEKKLFIHEYISGYYRVSSYFFGKLVSD) are Cytoplasmic-facing. The helical transmembrane segment at 478 to 498 (LLPMRFLPSVIYTCILYFMLG) threads the bilayer. Residues 499 to 506 (LKRTVEAF) are Extracellular-facing. Residues 507-527 (FIMMFTLIMVAYTASSMALAI) form a helical membrane-spanning segment. Over 528–535 (AAGQSVVS) the chain is Cytoplasmic. The helical transmembrane segment at 536-556 (VATLLMTISFVFMMLFSGLLV) threads the bilayer. The Extracellular portion of the chain corresponds to 557–632 (NLRTIGPWLS…LSPWGLWRNH (76 aa)). Cys-592 and Cys-610 are disulfide-bonded. N-linked (GlcNAc...) asparagine glycosylation is found at Asn-596 and Asn-600. A helical membrane pass occupies residues 633–653 (VALACMIIIFLTIAYLKLLFL). Residues 654 to 657 (KKYS) are Cytoplasmic-facing.

This sequence belongs to the ABC transporter superfamily. ABCG family. Eye pigment precursor importer (TC 3.A.1.204) subfamily. In terms of assembly, homodimer; disulfide-linked. The minimal functional unit is a homodimer, but the major oligomeric form in plasma membrane is a homotetramer with possibility of higher order oligomerization up to homododecamers. In terms of processing, N-glycosylated in brain capillary, kidney and small intestine but not in heart. Post-translationally, N-glycosylated. Glycosylation-deficient ABCG2 is normally expressed and functional. Phosphorylated. Phosphorylation may regulate the localization to the plasma membrane, the homooligomerization and therefore, the activity of the transporter. As to expression, highly expressed in brain capillary, kidney and small intestine. Lower expression in heart. Preferentially expressed (at protein level) on the luminal membrane of brain capillaries, in kidney and small intestine.

It is found in the cell membrane. It localises to the apical cell membrane. Its subcellular location is the mitochondrion membrane. The enzyme catalyses ATP + H2O + xenobioticSide 1 = ADP + phosphate + xenobioticSide 2.. The catalysed reaction is urate(in) + ATP + H2O = urate(out) + ADP + phosphate + H(+). It carries out the reaction indoxyl sulfate(in) + ATP + H2O = indoxyl sulfate(out) + ADP + phosphate + H(+). It catalyses the reaction sphing-4-enine 1-phosphate(in) + ATP + H2O = sphing-4-enine 1-phosphate(out) + ADP + phosphate + H(+). The enzyme catalyses estrone 3-sulfate(in) + ATP + H2O = estrone 3-sulfate(out) + ADP + phosphate + H(+). The catalysed reaction is dehydroepiandrosterone 3-sulfate(in) + ATP + H2O = dehydroepiandrosterone 3-sulfate(out) + ADP + phosphate + H(+). It carries out the reaction 4-methylumbelliferone sulfate(in) + ATP + H2O = 4-methylumbelliferone sulfate(out) + ADP + phosphate + H(+). It catalyses the reaction 5,7-dimethyl-2-methylamino-4-(3-pyridylmethyl)-1,3-benzothiazol-6-yl beta-D-glucuronate(in) + ATP + H2O = 5,7-dimethyl-2-methylamino-4-(3-pyridylmethyl)-1,3-benzothiazol-6-yl beta-D-glucuronate(out) + ADP + phosphate + H(+). The enzyme catalyses 4-methylumbelliferone beta-D-glucuronate(in) + ATP + H2O = 4-methylumbelliferone beta-D-glucuronate(out) + ADP + phosphate + H(+). The catalysed reaction is 5,7-dimethyl-2-methylamino-4-(3-pyridylmethyl)-1,3-benzothiazol-6-yl sulfate(in) + ATP + H2O = 5,7-dimethyl-2-methylamino-4-(3-pyridylmethyl)-1,3-benzothiazol-6-yl sulfate(out) + ADP + phosphate + H(+). It carries out the reaction 17beta-estradiol 17-O-(beta-D-glucuronate)(in) + ATP + H2O = 17beta-estradiol 17-O-(beta-D-glucuronate)(out) + ADP + phosphate + H(+). It catalyses the reaction methotrexate(in) + ATP + H2O = methotrexate(out) + ADP + phosphate + H(+). The enzyme catalyses riboflavin(in) + ATP + H2O = riboflavin(out) + ADP + phosphate + H(+). The catalysed reaction is pheophorbide a(in) + ATP + H2O = pheophorbide a(out) + ADP + phosphate + H(+). It carries out the reaction itaconate(in) + ATP + H2O = itaconate(out) + ADP + phosphate + H(+). Functionally, broad substrate specificity ATP-dependent transporter of the ATP-binding cassette (ABC) family that actively extrudes a wide variety of physiological compounds, dietary toxins and xenobiotics from cells. Involved in porphyrin homeostasis, mediating the export of protoporphyrin IX (PPIX) from both mitochondria to cytosol and cytosol to extracellular space, it also functions in the cellular export of heme. Also mediates the efflux of sphingosine-1-P from cells. Acts as a urate exporter functioning in both renal and extrarenal urate excretion. In kidney, it also functions as a physiological exporter of the uremic toxin indoxyl sulfate. Also involved in the excretion of steroids like estrone 3-sulfate/E1S, 3beta-sulfooxy-androst-5-en-17-one/DHEAS, and other sulfate conjugates. Mediates the secretion of the riboflavin and biotin vitamins into milk. Extrudes pheophorbide a, a phototoxic porphyrin catabolite of chlorophyll, reducing its bioavailability. Plays an important role in the exclusion of xenobiotics from the brain. It confers to cells a resistance to multiple drugs and other xenobiotics including mitoxantrone, pheophorbide, camptothecin, methotrexate, azidothymidine, and the anthracyclines daunorubicin and doxorubicin, through the control of their efflux. In placenta, it limits the penetration of drugs from the maternal plasma into the fetus. May play a role in early stem cell self-renewal by blocking differentiation. In inflammatory macrophages, exports itaconate from the cytosol to the extracellular compartment and limits the activation of TFEB-dependent lysosome biogenesis involved in antibacterial innate immune response. The polypeptide is Broad substrate specificity ATP-binding cassette transporter ABCG2 (Abcg2) (Rattus norvegicus (Rat)).